The chain runs to 840 residues: Sorting nexin-25 (840 aa).

A PXA domain is found at 1–164; sequence MDKALKEVFD…MLLAQLAYRE (164 aa). The RGS domain maps to 287–401; that stretch reads QFEDILANTF…IVSDLYEKLL (115 aa). The stretch at 434 to 499 forms a coiled coil; that stretch reads TNQINEQASF…RTDLQLHMAR (66 aa). The PX domain occupies 508 to 628; the sequence is GMWKASITSG…AFLSPSPDYL (121 aa). Ser665 carries the phosphoserine modification.

The protein belongs to the sorting nexin family.

The protein localises to the endosome membrane. In terms of biological role, may be involved in several stages of intracellular trafficking. This Homo sapiens (Human) protein is Sorting nexin-25 (SNX25).